A 506-amino-acid polypeptide reads, in one-letter code: Maturase K (506 aa).

Belongs to the intron maturase 2 family. MatK subfamily.

The protein resides in the plastid. It is found in the chloroplast. In terms of biological role, usually encoded in the trnK tRNA gene intron. Probably assists in splicing its own and other chloroplast group II introns. The sequence is that of Maturase K from Artanema fimbriatum.